Here is a 325-residue protein sequence, read N- to C-terminus: Thiamine-monophosphate kinase (325 aa).

4 residues coordinate Mg(2+): D30, S45, T46, and D47. H54 lines the substrate pocket. Residues D75 and D122 each contribute to the Mg(2+) site. ATP-binding positions include G121–D122 and R146. Residue D212 participates in Mg(2+) binding. S214 is a binding site for ATP. D215 contacts Mg(2+). Substrate is bound by residues E263 and Y319.

This sequence belongs to the thiamine-monophosphate kinase family.

The catalysed reaction is thiamine phosphate + ATP = thiamine diphosphate + ADP. It participates in cofactor biosynthesis; thiamine diphosphate biosynthesis; thiamine diphosphate from thiamine phosphate: step 1/1. With respect to regulation, is markedly activated by the monovalent cations K(+), NH(4)(+), and Rb(+). Is significantly inhibited by ADP, AMP, p-chloromercuribenzoate, N-ethylmaleimide, pyrophosphate, and EDTA. Functionally, catalyzes the ATP-dependent phosphorylation of thiamine-monophosphate (TMP) to form thiamine-pyrophosphate (TPP), the active form of vitamin B1. Cannot use thiamine as substrate. Is highly specific for ATP as phosphate donor. The chain is Thiamine-monophosphate kinase (thiL) from Escherichia coli (strain K12).